Consider the following 449-residue polypeptide: C4-dicarboxylate transport protein (449 aa).

The next 8 membrane-spanning stretches (helical) occupy residues 20 to 42 (YLQL…HCYP), 62 to 84 (IISP…VGTV), 91 to 113 (AMVY…AHVV), 164 to 181 (ILQV…LALA), 202 to 224 (LVQM…TIGK), 239 to 261 (SFYL…FSGF), 344 to 366 (LALF…AGFI), and 370 to 389 (ATLT…ILGV).

Belongs to the dicarboxylate/amino acid:cation symporter (DAACS) (TC 2.A.23) family.

The protein resides in the cell inner membrane. Responsible for the transport of dicarboxylates such as succinate, fumarate, and malate from the periplasm across the inner membrane. This Xylella fastidiosa (strain 9a5c) protein is C4-dicarboxylate transport protein (dctA).